The chain runs to 140 residues: Histone H2B (140 aa).

The span at 1–10 (MPPKAAEKKP) shows a compositional bias: basic and acidic residues. Residues 1 to 48 (MPPKAAEKKPSTGGKAPAGKAPAEKKEAGKKTAAAASGEKKKRGKTRK) are disordered. Lys8 and Lys9 each carry N6-acetyllysine; alternate. Residues Lys8 and Lys9 each participate in a glycyl lysine isopeptide (Lys-Gly) (interchain with G-Cter in SUMO); alternate cross-link. A compositionally biased stretch (low complexity) spans 11–21 (STGGKAPAGKA). At Lys15 the chain carries N6-acetyllysine. Lys25 bears the N6-acetyllysine; alternate mark. Lys25 participates in a covalent cross-link: Glycyl lysine isopeptide (Lys-Gly) (interchain with G-Cter in SUMO); alternate. Residue Lys26 forms a Glycyl lysine isopeptide (Lys-Gly) (interchain with G-Cter in SUMO) linkage. Residue Lys134 forms a Glycyl lysine isopeptide (Lys-Gly) (interchain with G-Cter in ubiquitin) linkage.

This sequence belongs to the histone H2B family. As to quaternary structure, the nucleosome is a histone octamer containing two molecules each of H2A, H2B, H3 and H4 assembled in one H3-H4 heterotetramer and two H2A-H2B heterodimers. The octamer wraps approximately 147 bp of DNA. Post-translationally, monoubiquitinated by the ubc2-bre1 complex to form H2BK123ub1. H2BK123ub1 gives a specific tag for epigenetic transcriptional activation and is also prerequisite for H3K4me and H3K79me formation. H2BK123ub1 also modulates the formation of double-strand breaks during meiosis and is a prerequisite for DNA-damage checkpoint activation. In terms of processing, acetylated by gcn5 to form H2BK11ac and H2BK16ac. H2BK16ac can also be formed by esa1. Acetylation of N-terminal lysines and particularly formation of H2BK11acK16ac has a positive effect on transcription. Sumoylation to form H2BK6su or H2BK7su, and probably also H2BK16su or H2BK17su, occurs preferentially near the telomeres and represses gene transcription.

It is found in the nucleus. It localises to the chromosome. Functionally, core component of nucleosome. Nucleosomes wrap and compact DNA into chromatin, limiting DNA accessibility to the cellular machineries which require DNA as a template. Histones thereby play a central role in transcription regulation, DNA repair, DNA replication and chromosomal stability. DNA accessibility is regulated via a complex set of post-translational modifications of histones, also called histone code, and nucleosome remodeling. This Emericella nidulans (strain FGSC A4 / ATCC 38163 / CBS 112.46 / NRRL 194 / M139) (Aspergillus nidulans) protein is Histone H2B (htbA).